Reading from the N-terminus, the 340-residue chain is Glycerol-3-phosphate dehydrogenase [NAD(P)+] (340 aa).

4 residues coordinate NADPH: serine 14, phenylalanine 15, arginine 35, and lysine 108. Sn-glycerol 3-phosphate contacts are provided by lysine 108 and glycine 136. Alanine 140 contributes to the NADPH binding site. Sn-glycerol 3-phosphate contacts are provided by lysine 191, aspartate 244, serine 254, arginine 255, and asparagine 256. Lysine 191 acts as the Proton acceptor in catalysis. Residue arginine 255 participates in NADPH binding. Glutamate 281 contacts NADPH.

The protein belongs to the NAD-dependent glycerol-3-phosphate dehydrogenase family.

It localises to the cytoplasm. It catalyses the reaction sn-glycerol 3-phosphate + NAD(+) = dihydroxyacetone phosphate + NADH + H(+). The enzyme catalyses sn-glycerol 3-phosphate + NADP(+) = dihydroxyacetone phosphate + NADPH + H(+). Its pathway is membrane lipid metabolism; glycerophospholipid metabolism. In terms of biological role, catalyzes the reduction of the glycolytic intermediate dihydroxyacetone phosphate (DHAP) to sn-glycerol 3-phosphate (G3P), the key precursor for phospholipid synthesis. The protein is Glycerol-3-phosphate dehydrogenase [NAD(P)+] of Pseudomonas paraeruginosa (strain DSM 24068 / PA7) (Pseudomonas aeruginosa (strain PA7)).